A 500-amino-acid chain; its full sequence is Abscisic acid 8'-hydroxylase 3 (500 aa).

Residues 3–23 (ASFVIVIVISFFISLAFMCYV) form a helical membrane-spanning segment. Cys426 serves as a coordination point for heme.

It belongs to the cytochrome P450 family. Requires heme as cofactor.

The protein resides in the membrane. The catalysed reaction is 2-cis-(+)-abscisate + reduced [NADPH--hemoprotein reductase] + O2 = (+)-8'-hydroxyabscisate + oxidized [NADPH--hemoprotein reductase] + H2O + H(+). Its pathway is plant hormone degradation; abscisic acid degradation. Involved in the oxidative degradation of abscisic acid. This chain is Abscisic acid 8'-hydroxylase 3 (CYP707A7), found in Oryza sativa subsp. japonica (Rice).